Here is a 160-residue protein sequence, read N- to C-terminus: Large ribosomal subunit protein uL13 (160 aa).

Belongs to the universal ribosomal protein uL13 family. As to quaternary structure, part of the 50S ribosomal subunit.

This protein is one of the early assembly proteins of the 50S ribosomal subunit, although it is not seen to bind rRNA by itself. It is important during the early stages of 50S assembly. This Orientia tsutsugamushi (strain Boryong) (Rickettsia tsutsugamushi) protein is Large ribosomal subunit protein uL13.